Here is a 420-residue protein sequence, read N- to C-terminus: Cytochrome P-450 monooxygenase DoxA (420 aa).

C367 lines the heme pocket.

This sequence belongs to the cytochrome P450 family. As to quaternary structure, monomer. Heme is required as a cofactor.

It is found in the cytoplasm. The enzyme catalyses 13-deoxydaunorubicin + NADPH + O2 + H(+) = 13-dihydrodaunorubicin + NADP(+) + H2O. The catalysed reaction is 13-dihydrodaunorubicin + NADPH + O2 + H(+) = daunorubicin + NADP(+) + 2 H2O. It carries out the reaction 13-deoxycarminomycin + NADPH + O2 + H(+) = 13-dihydrocarminomycin + NADP(+) + H2O. It catalyses the reaction 13-dihydrocarminomycin + NADPH + O2 + H(+) = carminomycin + NADP(+) + 2 H2O. The enzyme catalyses daunorubicin + NADPH + O2 + H(+) = doxorubicin + NADP(+) + H2O. It functions in the pathway antibiotic biosynthesis; daunorubicin biosynthesis. The protein operates within antibiotic biosynthesis; carminomycin biosynthesis. Its pathway is antibiotic biosynthesis; doxorubicin biosynthesis. Involved in the biosynthesis of the anthracyclines carminomycin, daunorubicin (daunomycin) and doxorubicin (adriamycin) which are aromatic polyketide antibiotics that exhibit high cytotoxicity and are widely applied in the chemotherapy of a variety of cancers. In vivo, DoxA catalyzes the C-13 hydroxylation of 13-deoxycarminomycin and 13-deoxydaunorubicin to yield 13-dihydrocarminomycin and 13-dihydrodaunorubicin, respectively, as well as the oxidation of these 13-dihydro-anthracyclines to their respective 13-keto forms, carminomycin and daunorubicin. In vivo, it also catalyzes the C-14 hydroxylation of daunorubicin to form doxorubicin. It can only use NADP. DoxA acts jointly with DnrV. This is Cytochrome P-450 monooxygenase DoxA (doxA) from Streptomyces peucetius subsp. caesius.